The following is a 480-amino-acid chain: MVRRIASATPMVQSPMSPLGTTYCVRPNPVSLNLQRRPLVIASTDEAKVTIIYAGLLIPGDGEPLRNAALVISDKIIAFVGSEADIPKKYLRSTQSTHRVPVLMPGLWDCHMHFGGDDDYYNDYTSGLATHPASSGARLARGCWEALQNGYTSYRDLAGYGCEVAKAINDGTIVGPNVYSSGAALSQTAGHGDIFALPAGEVLGSYGVMNPRPGYWGAGPLCIADGVEEVRRAVRLQIRRGAKVIKVMASGGVMSRDDNPNFAQFSPEELKVIVEEAARQNRIVSAHVHGKAGIMAAIKAGCKSLEHVSYADEEVWELMKEKGILYVATRSVIEIFLASNGEGLVKESWAKLQALADSHLKAYQGAIKAGVTIALGTDTAPGGPTALELQFAVERGGMTPLEAIKAATANAPLSVGPQAPLTGQLREGYEADVIALEENPLEDIKVFQEPKAVTHVWKGGKLFKGPGIGPWGEDARNPFL.

Zn(2+) contacts are provided by H111, H113, K246, H287, and H307. The active site involves K246. The active site involves D378.

Belongs to the metallo-dependent hydrolases superfamily. Ochratoxinase amidase 2 family. Homooctamer. It depends on Zn(2+) as a cofactor.

It is found in the secreted. The enzyme catalyses ochratoxin A + H2O = ochratoxin alpha + L-phenylalanine. With respect to regulation, the Zn(2+)-specific chelator 1,10-phenanthroline inhibits the enzyme activity. In terms of biological role, carboxypeptidase that catalyzes the release of a C-terminal amino acid with specific catalytic activity for aromatic amino acids such as phenylalanine. Is able to degrade ochratoxin A, one of the five major mycotoxins most harmful to humans and animals that is produced by Aspergillus and Penicillium species and occurs in a wide range of agricultural products. The sequence is that of Ochratoxinase from Aspergillus niger (strain ATCC MYA-4892 / CBS 513.88 / FGSC A1513).